A 197-amino-acid polypeptide reads, in one-letter code: FMN-dependent NADH:quinone oxidoreductase (197 aa).

Residues Ser10, 16 to 18 (SKS), and 96 to 99 (MYNF) each bind FMN.

Belongs to the azoreductase type 1 family. As to quaternary structure, homodimer. The cofactor is FMN.

It carries out the reaction 2 a quinone + NADH + H(+) = 2 a 1,4-benzosemiquinone + NAD(+). It catalyses the reaction N,N-dimethyl-1,4-phenylenediamine + anthranilate + 2 NAD(+) = 2-(4-dimethylaminophenyl)diazenylbenzoate + 2 NADH + 2 H(+). In terms of biological role, quinone reductase that provides resistance to thiol-specific stress caused by electrophilic quinones. Its function is as follows. Also exhibits azoreductase activity. Catalyzes the reductive cleavage of the azo bond in aromatic azo compounds to the corresponding amines. This Marinomonas sp. (strain MWYL1) protein is FMN-dependent NADH:quinone oxidoreductase.